Reading from the N-terminus, the 46-residue chain is Viscotoxin-A2 (46 aa).

3 cysteine pairs are disulfide-bonded: C3/C40, C4/C32, and C16/C26.

It belongs to the plant thionin (TC 1.C.44) family.

The protein localises to the secreted. Functionally, thionins are small plant proteins which are toxic to animal cells. They seem to exert their toxic effect at the level of the cell membrane. Their precise function is not known. The sequence is that of Viscotoxin-A2 (THI2.3) from Viscum album (European mistletoe).